The primary structure comprises 796 residues: DNA damage-responsive transcriptional repressor RPH1 (796 aa).

The JmjN domain maps to 14–55 (VPVFKPTYEQFEDFYAYCKAINKYGMKSGVVKVIPPKEWKDK). The JmjC domain maps to 193–355 (PEGLNVWNVA…IGKKAGKCHC (163 aa)). Residue Thr-399 is modified to Phosphothreonine. Phosphoserine occurs at positions 430, 459, 557, 561, 575, and 584. The Bipartite nuclear localization signal motif lies at 455 to 471 (KRISSFQEQPLNKLLKR). Residues 599–692 (RQQHSQQHSF…DKEQGSSPLN (94 aa)) form a disordered region. The span at 601-621 (QHSQQHSFSTPSTVSNLSTSV) shows a compositional bias: polar residues. The span at 629–640 (NDIKTPHPERPN) shows a compositional bias: basic and acidic residues. Ser-652 is subject to Phosphoserine. The segment covering 654–669 (VETSKSNLILSKVAST) has biased composition (polar residues). The span at 670–686 (RQEDSFTSRNDDLDKEQ) shows a compositional bias: basic and acidic residues. A Phosphoserine modification is found at Ser-689. A C2H2-type 1 zinc finger spans residues 709–732 (YICKECQRKFSSGHHLTRHKKSVH). The C2H2-type 2; atypical zinc-finger motif lies at 738 to 763 (HSCPKCGKRFKRRDHVLQHLNKKIPC). Residues 774–796 (IMNPTVQPQDGKAAINQQSTPLN) are disordered.

Post-translationally, RAD53-dependent phosphorylated in response to DNA damage.

The protein resides in the nucleus. In terms of biological role, transcriptional repressor of photolyase PHR1. Recognizes and binds the sequence AG(4) in the upstream repressing sequence of PHR1. Derepresses PHR1 transcription when phosphorylated. This is DNA damage-responsive transcriptional repressor RPH1 (RPH1) from Saccharomyces cerevisiae (strain ATCC 204508 / S288c) (Baker's yeast).